The chain runs to 335 residues: Casein kinase I (335 aa).

The 270-residue stretch at Tyr-9–Phe-278 folds into the Protein kinase domain. Residues Ile-15–Ile-23 and Lys-38 contribute to the ATP site. Residue Asp-128 is the Proton acceptor of the active site. Positions Arg-304–Pro-335 are disordered. The span at Ser-305–Gln-316 shows a compositional bias: polar residues. Basic and acidic residues predominate over residues Trp-317–Leu-327.

The protein belongs to the protein kinase superfamily. CK1 Ser/Thr protein kinase family. Casein kinase I subfamily.

The catalysed reaction is L-seryl-[protein] + ATP = O-phospho-L-seryl-[protein] + ADP + H(+). It catalyses the reaction L-threonyl-[protein] + ATP = O-phospho-L-threonyl-[protein] + ADP + H(+). Casein kinases are operationally defined by their preferential utilization of acidic proteins such as caseins as substrates. It can phosphorylate a large number of proteins. The sequence is that of Casein kinase I from Eimeria tenella (Coccidian parasite).